A 440-amino-acid polypeptide reads, in one-letter code: Transposon Ty1-NL1 Gag polyprotein (440 aa).

Composition is skewed to polar residues over residues 1 to 23 (MESQQLSQHSPISHGSACASVTS), 48 to 60 (TKANSQQTTTPAS), 71 to 86 (SPQTAQSHSPQNGPYQ), and 131 to 152 (PQYPSSVGTPLSTPSPESGNTF). Disordered stretches follow at residues 1–86 (MESQ…GPYQ), 131–171 (PQYP…YVRP), and 350–425 (QQES…TEPI). Residues 153 to 165 (TDSSSADSDMTST) are compositionally biased toward low complexity. The interval 299–401 (NNGIPINNKV…NSQSRTARAH (103 aa)) is RNA-binding. Basic and acidic residues predominate over residues 363–372 (NPSDEKKDSR). Residues 373 to 412 (TYTNTTKPKSITRNSQKPNNSQSRTARAHNVSTSNNSSGP) are compositionally biased toward polar residues.

As to quaternary structure, homotrimer.

It is found in the cytoplasm. Its function is as follows. Capsid protein (CA) is the structural component of the virus-like particle (VLP), forming the shell that encapsulates the retrotransposons dimeric RNA genome. The particles are assembled from trimer-clustered units and there are holes in the capsid shells that allow for the diffusion of macromolecules. CA also has nucleocapsid-like chaperone activity, promoting primer tRNA(i)-Met annealing to the multipartite primer-binding site (PBS), dimerization of Ty1 RNA and initiation of reverse transcription. The chain is Transposon Ty1-NL1 Gag polyprotein (TY1A-NL1) from Saccharomyces cerevisiae (strain ATCC 204508 / S288c) (Baker's yeast).